A 63-amino-acid chain; its full sequence is Conotoxin LeDr243 (63 aa).

An N-terminal signal peptide occupies residues 1–22 (MRCLPVFVILLLLIASTPSIDA). Residues 23-47 (RPKTKDDMPLASFNDNAKRILQILS) constitute a propeptide that is removed on maturation. Cysteine 60 carries the post-translational modification Cysteine amide. A propeptide spanning residues 62-63 (LG) is cleaved from the precursor.

It belongs to the conotoxin T superfamily. In terms of processing, contains 2 disulfide bonds that can be either 'C1-C3, C2-C4' or 'C1-C4, C2-C3', since these disulfide connectivities have been observed for conotoxins with cysteine framework V (for examples, see AC P0DQQ7 and AC P81755). As to expression, expressed by the venom duct.

It localises to the secreted. This chain is Conotoxin LeDr243, found in Conus litteratus (Lettered cone).